The primary structure comprises 413 residues: S-adenosylmethionine synthase (413 aa).

Histidine 15 is a binding site for ATP. Position 17 (aspartate 17) interacts with Mg(2+). Glutamate 43 lines the K(+) pocket. The L-methionine site is built by glutamate 56 and glutamine 100. The tract at residues 100–110 is flexible loop; sequence QSPDISQGVNE. ATP contacts are provided by residues 171-173, 248-249, aspartate 257, 263-264, alanine 280, and lysine 284; these read DGK, KF, and RK. Aspartate 257 contributes to the L-methionine binding site. L-methionine is bound at residue lysine 288.

Belongs to the AdoMet synthase family. As to quaternary structure, homotetramer; dimer of dimers. The cofactor is Mg(2+). Requires K(+) as cofactor.

It is found in the cytoplasm. The catalysed reaction is L-methionine + ATP + H2O = S-adenosyl-L-methionine + phosphate + diphosphate. It participates in amino-acid biosynthesis; S-adenosyl-L-methionine biosynthesis; S-adenosyl-L-methionine from L-methionine: step 1/1. Its function is as follows. Catalyzes the formation of S-adenosylmethionine (AdoMet) from methionine and ATP. The overall synthetic reaction is composed of two sequential steps, AdoMet formation and the subsequent tripolyphosphate hydrolysis which occurs prior to release of AdoMet from the enzyme. In Prochlorococcus marinus subsp. pastoris (strain CCMP1986 / NIES-2087 / MED4), this protein is S-adenosylmethionine synthase.